The following is a 440-amino-acid chain: Transposon Ty1-BR Gag polyprotein (440 aa).

3 stretches are compositionally biased toward polar residues: residues 1 to 10 (MESQQLSNYP), 48 to 60 (TKAN…TPAS), and 127 to 152 (QSQF…GNTF). 3 disordered regions span residues 1-93 (MESQ…MMTQ), 126-173 (PQSQ…RPPP), and 352-440 (GSRN…PETY). A compositionally biased stretch (low complexity) spans 153–165 (TDSSSADSDMTST). Positions 299 to 401 (NNGIHINNKV…NSKSKTARAH (103 aa)) are RNA-binding. A compositionally biased stretch (low complexity) spans 402-418 (NVSTSNNSPSTDNDSIS). At Ser-416 the chain carries Phosphoserine. Residues 419-428 (KSTTEPIQLN) are compositionally biased toward polar residues. A compositionally biased stretch (basic and acidic residues) spans 429–440 (NKHDLHLRPETY).

In terms of assembly, homotrimer.

It localises to the cytoplasm. Capsid protein (CA) is the structural component of the virus-like particle (VLP), forming the shell that encapsulates the retrotransposons dimeric RNA genome. The particles are assembled from trimer-clustered units and there are holes in the capsid shells that allow for the diffusion of macromolecules. CA also has nucleocapsid-like chaperone activity, promoting primer tRNA(i)-Met annealing to the multipartite primer-binding site (PBS), dimerization of Ty1 RNA and initiation of reverse transcription. The chain is Transposon Ty1-BR Gag polyprotein (TY1A-BR) from Saccharomyces cerevisiae (strain ATCC 204508 / S288c) (Baker's yeast).